The following is a 254-amino-acid chain: RING-H2 finger protein ATL28 (254 aa).

The helical transmembrane segment at Val-25–Trp-45 threads the bilayer. The segment at Cys-103–Arg-145 adopts an RING-type; atypical zinc-finger fold.

This sequence belongs to the RING-type zinc finger family. ATL subfamily.

It localises to the membrane. It catalyses the reaction S-ubiquitinyl-[E2 ubiquitin-conjugating enzyme]-L-cysteine + [acceptor protein]-L-lysine = [E2 ubiquitin-conjugating enzyme]-L-cysteine + N(6)-ubiquitinyl-[acceptor protein]-L-lysine.. Its pathway is protein modification; protein ubiquitination. This is RING-H2 finger protein ATL28 (ATL28) from Arabidopsis thaliana (Mouse-ear cress).